The primary structure comprises 229 residues: Ribonuclease HII (229 aa).

The RNase H type-2 domain occupies 42–229 (TRIAGVDEVG…KPVHKILYQE (188 aa)). A divalent metal cation-binding residues include D48, E49, and D139.

Belongs to the RNase HII family. Mn(2+) is required as a cofactor. It depends on Mg(2+) as a cofactor.

It is found in the cytoplasm. It catalyses the reaction Endonucleolytic cleavage to 5'-phosphomonoester.. Functionally, endonuclease that specifically degrades the RNA of RNA-DNA hybrids. This is Ribonuclease HII from Ruegeria sp. (strain TM1040) (Silicibacter sp.).